The primary structure comprises 555 residues: Potassium-transporting ATPase potassium-binding subunit (555 aa).

Transmembrane regions (helical) follow at residues 2 to 22 (IWVA…PTGI), 60 to 80 (QYAL…YFIF), 130 to 150 (IGIT…VMAF), 173 to 193 (VFLP…VPQT), 246 to 266 (MSNI…PFTY), 278 to 298 (ILFV…TTSE), 374 to 394 (AGFV…GLMV), 412 to 432 (LIAV…ALAL), 483 to 503 (LVMF…AASL), and 525 to 545 (GIFI…MLVL).

Belongs to the KdpA family. As to quaternary structure, the system is composed of three essential subunits: KdpA, KdpB and KdpC.

It localises to the cell membrane. Part of the high-affinity ATP-driven potassium transport (or Kdp) system, which catalyzes the hydrolysis of ATP coupled with the electrogenic transport of potassium into the cytoplasm. This subunit binds the extracellular potassium ions and delivers the ions to the membrane domain of KdpB through an intramembrane tunnel. The protein is Potassium-transporting ATPase potassium-binding subunit of Bacillus cereus (strain AH820).